Here is a 154-residue protein sequence, read N- to C-terminus: 3-hydroxyacyl-[acyl-carrier-protein] dehydratase FabZ (154 aa).

Residue His55 is part of the active site.

This sequence belongs to the thioester dehydratase family. FabZ subfamily.

The protein resides in the cytoplasm. The catalysed reaction is a (3R)-hydroxyacyl-[ACP] = a (2E)-enoyl-[ACP] + H2O. Its function is as follows. Involved in unsaturated fatty acids biosynthesis. Catalyzes the dehydration of short chain beta-hydroxyacyl-ACPs and long chain saturated and unsaturated beta-hydroxyacyl-ACPs. The chain is 3-hydroxyacyl-[acyl-carrier-protein] dehydratase FabZ from Nitratidesulfovibrio vulgaris (strain ATCC 29579 / DSM 644 / CCUG 34227 / NCIMB 8303 / VKM B-1760 / Hildenborough) (Desulfovibrio vulgaris).